A 154-amino-acid polypeptide reads, in one-letter code: Crossover junction endodeoxyribonuclease RuvC (154 aa).

Active-site residues include D7, E67, and D139. Positions 7, 67, and 139 each coordinate Mg(2+).

It belongs to the RuvC family. Homodimer which binds Holliday junction (HJ) DNA. The HJ becomes 2-fold symmetrical on binding to RuvC with unstacked arms; it has a different conformation from HJ DNA in complex with RuvA. In the full resolvosome a probable DNA-RuvA(4)-RuvB(12)-RuvC(2) complex forms which resolves the HJ. Mg(2+) is required as a cofactor.

The protein resides in the cytoplasm. The enzyme catalyses Endonucleolytic cleavage at a junction such as a reciprocal single-stranded crossover between two homologous DNA duplexes (Holliday junction).. The RuvA-RuvB-RuvC complex processes Holliday junction (HJ) DNA during genetic recombination and DNA repair. Endonuclease that resolves HJ intermediates. Cleaves cruciform DNA by making single-stranded nicks across the HJ at symmetrical positions within the homologous arms, yielding a 5'-phosphate and a 3'-hydroxyl group; requires a central core of homology in the junction. The consensus cleavage sequence is 5'-(A/T)TT(C/G)-3'. Cleavage occurs on the 3'-side of the TT dinucleotide at the point of strand exchange. HJ branch migration catalyzed by RuvA-RuvB allows RuvC to scan DNA until it finds its consensus sequence, where it cleaves and resolves the cruciform DNA. This is Crossover junction endodeoxyribonuclease RuvC from Prochlorococcus marinus (strain NATL1A).